The sequence spans 61 residues: Small ribosomal subunit protein uS14B (61 aa).

Cysteine 24, cysteine 27, cysteine 40, and cysteine 43 together coordinate Zn(2+).

This sequence belongs to the universal ribosomal protein uS14 family. Zinc-binding uS14 subfamily. As to quaternary structure, part of the 30S ribosomal subunit. Contacts proteins S3 and S10. Zn(2+) serves as cofactor.

In terms of biological role, binds 16S rRNA, required for the assembly of 30S particles and may also be responsible for determining the conformation of the 16S rRNA at the A site. This Mycobacteroides abscessus (strain ATCC 19977 / DSM 44196 / CCUG 20993 / CIP 104536 / JCM 13569 / NCTC 13031 / TMC 1543 / L948) (Mycobacterium abscessus) protein is Small ribosomal subunit protein uS14B.